An 804-amino-acid chain; its full sequence is Cell surface sensor MSB2 (804 aa).

A signal peptide spans 1-20 (MHNFSKLAVAFVAAASFASA). The Extracellular portion of the chain corresponds to 21–694 (EPETKAKVER…TNQSATQRGT (674 aa)). An N-linked (GlcNAc...) asparagine glycan is attached at asparagine 45. Low complexity-rich tracts occupy residues 46–58 (TTTPASEASSSTS) and 69–80 (SSFSSSASSSSA). Disordered stretches follow at residues 46 to 90 (TTTP…RQPT) and 105 to 220 (TDST…ATSN). Residues 46 to 475 (TTTPASEASS…SVAPTSATSS (430 aa)) are serine/threonine rich region (STR). 2 stretches are compositionally biased toward polar residues: residues 81–90 (QELTASRQPT) and 109–126 (PFSQRPATSGAGRSSATG). 2 stretches are compositionally biased toward low complexity: residues 128-143 (VTPIIVPSSASPPSTA) and 150-169 (SALTTSQNSTSAATSESVTS). Asparagine 157 carries an N-linked (GlcNAc...) asparagine glycan. A compositionally biased stretch (polar residues) spans 170 to 188 (PGSTSGPAGTPESSSASDF). Over residues 189-202 (TSAVATSRASTATS) the composition is skewed to low complexity. Residues asparagine 298, asparagine 308, asparagine 357, and asparagine 393 are each glycosylated (N-linked (GlcNAc...) asparagine). The span at 345–394 (VQTLPPVSTPTANGTVTSPPVDSQTTVLPTTTPGLSSDTIVTSPGVTANS) shows a compositional bias: polar residues. The disordered stretch occupies residues 345 to 516 (VQTLPPVSTP…APTVLPSDLP (172 aa)). Low complexity-rich tracts occupy residues 395 to 407 (TQVPTTVPTTIPT) and 427 to 476 (NNTV…TSSA). N-linked (GlcNAc...) asparagine glycosylation is found at asparagine 427 and asparagine 433. Positions 482-641 (WLPTTIIVQA…NGMLAHNLTM (160 aa)) are HKR11-MSB2 homology domain (HMH). The span at 493–508 (LPSTTGSSTNAPSSAP) shows a compositional bias: polar residues. 5 N-linked (GlcNAc...) asparagine glycosylation sites follow: asparagine 629, asparagine 638, asparagine 669, asparagine 683, and asparagine 686. Residues 658 to 689 (KPAGAGSGTGGNGSNGPNDVFNNDNNSTNQSA) are disordered. A compositionally biased stretch (gly residues) spans 660-671 (AGAGSGTGGNGS). Positions 672–686 (NGPNDVFNNDNNSTN) are enriched in low complexity. Residues 695 to 715 (VAGIAFGAVSLAAAYGAAMFI) form a helical membrane-spanning segment. The Cytoplasmic segment spans residues 716-804 (VARRYKKKRQ…VAQENSLGWN (89 aa)). Disordered stretches follow at residues 724 to 748 (RQAHRRSSSVATPSEMRQSGSPALM) and 762 to 804 (GVMG…LGWN). Residues 731 to 744 (SSVATPSEMRQSGS) show a composition bias toward polar residues. Over residues 774 to 787 (GSNGSGRSAGNSAR) the composition is skewed to low complexity.

The protein belongs to the HKR1/MSB2 family.

It is found in the cell membrane. It localises to the vacuole membrane. Its function is as follows. MSB2 and SHO1 have overlapping functions in recognizing various surface signals for MAPK PMK1 activation and appressorium formation. While MSB2 is critical for sensing surface hydrophobicity and cutin monomers, SHO1 may play a more important role in recognizing rice leaf waxes. The polypeptide is Cell surface sensor MSB2 (Pyricularia oryzae (strain 70-15 / ATCC MYA-4617 / FGSC 8958) (Rice blast fungus)).